We begin with the raw amino-acid sequence, 604 residues long: Procollagen galactosyltransferase 1 (604 aa).

Residues 1–18 (MHLLCFFFLLLWTGPARS) form the signal peptide. N-linked (GlcNAc...) asparagine glycans are attached at residues N78, N166, N363, and N561. Over residues 570–580 (RARSRKSREQE) the composition is skewed to basic and acidic residues. Positions 570 to 604 (RARSRKSREQEELSSEAQNTDVLQSPLDSTARDEL) are disordered. Over residues 584-597 (SEAQNTDVLQSPLD) the composition is skewed to polar residues. Positions 601-604 (RDEL) match the Prevents secretion from ER motif.

The protein belongs to the glycosyltransferase 25 family.

Its subcellular location is the endoplasmic reticulum lumen. It catalyses the reaction (5R)-5-hydroxy-L-lysyl-[collagen] + UDP-alpha-D-galactose = (5R)-5-O-(beta-D-galactosyl)-5-hydroxy-L-lysyl-[collagen] + UDP + H(+). Functionally, beta-galactosyltransferase that transfers beta-galactose to hydroxylysine residues of type I collagen. By acting on collagen glycosylation, facilitates the formation of collagen triple helix. The polypeptide is Procollagen galactosyltransferase 1 (colgalt1) (Danio rerio (Zebrafish)).